The following is a 268-amino-acid chain: Phosphatidylglycerol--prolipoprotein diacylglyceryl transferase (268 aa).

7 helical membrane-spanning segments follow: residues 10 to 30 (VALA…LIGI), 56 to 76 (LVFW…VLFY), 92 to 112 (WKGG…ALWF), 120 to 140 (FFEL…AGRI), 174 to 194 (PSQL…LWLF), 202 to 222 (MAVS…VEFV), and 236 to 256 (WLTM…GLIW). Arg139 serves as a coordination point for a 1,2-diacyl-sn-glycero-3-phospho-(1'-sn-glycerol).

Belongs to the Lgt family.

It localises to the cell inner membrane. The enzyme catalyses L-cysteinyl-[prolipoprotein] + a 1,2-diacyl-sn-glycero-3-phospho-(1'-sn-glycerol) = an S-1,2-diacyl-sn-glyceryl-L-cysteinyl-[prolipoprotein] + sn-glycerol 1-phosphate + H(+). The protein operates within protein modification; lipoprotein biosynthesis (diacylglyceryl transfer). Catalyzes the transfer of the diacylglyceryl group from phosphatidylglycerol to the sulfhydryl group of the N-terminal cysteine of a prolipoprotein, the first step in the formation of mature lipoproteins. This is Phosphatidylglycerol--prolipoprotein diacylglyceryl transferase from Pseudomonas putida (strain ATCC 700007 / DSM 6899 / JCM 31910 / BCRC 17059 / LMG 24140 / F1).